The following is a 1190-amino-acid chain: MPVRGDRGFPPRRELSGWLRAPGMEELIWEQYTVTLQKDSKRGFGIAVSGGRDNPHFENGETSIVISDVLPGGPADGLLQENDRVVMVNGTPMEDVLHSFAVQQLRKSGKVAAIVVKRPRKVQVAALQASPPLDQDDRAFEVMDEFDGRSFRSGYSERSRLNSHGGRSRSWEDSPERGRPHERARSRERDLSRDRSRGRSLERGLDQDHARTRDRSRGRSLERGLDHDFGPSRDRDRDRSRGRSIDQDYERAYHRAYDPDYERAYSPEYRRGARHDARSRGPRSRSREHPHSRSPSPEPRGRPGPIGVLLMKSRANEEYGLRLGSQIFVKEMTRTGLATKDGNLHEGDIILKINGTVTENMSLTDARKLIEKSRGKLQLVVLRDSQQTLINIPSLNDSDSEIEDISEIESNRSFSPEERRHQYSDYDYHSSSEKLKERPSSREDTPSRLSRMGATPTPFKSTGDIAGTVVPETNKEPRYQEDPPAPQPKAAPRTFLRPSPEDEAIYGPNTKMVRFKKGDSVGLRLAGGNDVGIFVAGIQEGTSAEQEGLQEGDQILKVNTQDFRGLVREDAVLYLLEIPKGEMVTILAQSRADVYRDILACGRGDSFFIRSHFECEKETPQSLAFTRGEVFRVVDTLYDGKLGNWLAVRIGNELEKGLIPNKSRAEQMASVQNAQRDNAGDRADFWRMRGQRSGVKKNLRKSREDLTAVVSVSTKFPAYERVLLREAGFKRPVVLFGPIADIAMEKLANELPDWFQTAKTEPKDAGSEKSTGVVRLNTVRQIIEQDKHALLDVTPKAVDLLNYTQWFPIVIFFNPDSRQGVKTMRQRLNPTSNKSSRKLFDQANKLKKTCAHLFTATINLNSANDSWFGSLKDTIQHQQGEAVWVSEGKMEGMDDDPEDRMSYLTAMGADYLSCDSRLISDFEDTDGEGGAYTDNELDEPAEEPLVSSITRSSEPVQHEESIRKPSPEPRAQMRRAASSDQLRDNSPPPAFKPEPPKAKTQNKEESYDFSKSYEYKSNPSAVAGNETPGASTKGYPPPVAAKPTFGRSILKPSTPIPPQEGEEVGESSEEQDNAPKSVLGKVKIFEKMDHKARLQRMQELQEAQNARIEIAQKHPDIYAVPIKTHKPDPGTPQHTSSRPPEPQKAPSRPYQDTRGSYGSDAEEEEYRQQLSEHSKRGYYGQSARYRDTEL.

Serine 16 is modified (phosphoserine). The PDZ 1 domain occupies 33-120 (TVTLQKDSKR…VAAIVVKRPR (88 aa)). A phosphoserine mark is found at serine 130, serine 150, serine 153, serine 163, serine 168, serine 170, serine 174, serine 200, serine 220, serine 232, serine 244, serine 266, serine 325, serine 398, serine 400, serine 406, serine 415, serine 424, serine 430, and serine 431. A disordered region spans residues 152–306 (RSGYSERSRL…PEPRGRPGPI (155 aa)). Basic and acidic residues predominate over residues 169–291 (RSWEDSPERG…PRSRSREHPH (123 aa)). One can recognise a PDZ 2 domain in the interval 307–385 (GVLLMKSRAN…KLQLVVLRDS (79 aa)). The segment at 408-506 (IESNRSFSPE…RPSPEDEAIY (99 aa)) is disordered. The span at 415-446 (SPEERRHQYSDYDYHSSSEKLKERPSSREDTP) shows a compositional bias: basic and acidic residues. Threonine 455 is subject to Phosphothreonine. Serine 499 carries the phosphoserine modification. The region spanning 509–590 (NTKMVRFKKG…GEMVTILAQS (82 aa)) is the PDZ 3 domain. Tyrosine 574 is modified (phosphotyrosine). One can recognise an SH3 domain in the interval 604 to 669 (GDSFFIRSHF…PNKSRAEQMA (66 aa)). A Guanylate kinase-like domain is found at 678–876 (NAGDRADFWR…WFGSLKDTIQ (199 aa)). A phosphoserine mark is found at serine 702 and serine 902. Position 905 is a phosphothreonine (threonine 905). Residues serine 913 and serine 920 each carry the phosphoserine modification. Disordered regions lie at residues 920 to 1079 (SDFE…KSVL) and 1105 to 1190 (NARI…DTEL). Threonine 925 and threonine 933 each carry phosphothreonine. A compositionally biased stretch (basic and acidic residues) spans 956–967 (VQHEESIRKPSP). Residues serine 966, serine 978, serine 986, serine 1006, serine 1067, and serine 1068 each carry the phosphoserine modification. A compositionally biased stretch (basic and acidic residues) spans 994–1014 (EPPKAKTQNKEESYDFSKSYE). Residues 1060–1072 (EGEEVGESSEEQD) show a composition bias toward acidic residues. Tyrosine 1118 carries the post-translational modification Phosphotyrosine. Threonine 1131 bears the Phosphothreonine mark. A phosphoserine mark is found at serine 1147 and serine 1159. The segment covering 1166-1175 (YRQQLSEHSK) has biased composition (basic and acidic residues). Residues 1188–1190 (TEL) are interaction with SCRIB.

This sequence belongs to the MAGUK family. As to quaternary structure, homodimer. Interacts (via PDZ2 domain) with TJP1/ZO1 (via PDZ2 domain). Interacts with OCLN. Interacts with UBN1. Interacts with SAFB in the nucleus. Interacts with SCRIB. Interacts with USP53 (via the C-terminal region). Interacts with claudins, including CLDN1, CLDN2, CLDN3, CLDN5 and CLDN7. Interacts with CLDN18. Interacts (via N-terminus) with CTNNA1. As to expression, this protein is found in epithelial cell junctions. Isoform A1 is abundant in the heart and brain. Detected in brain and skeletal muscle. It is present almost exclusively in normal tissues. Isoform C1 is expressed at high level in the kidney, pancreas, heart and placenta. Not detected in brain and skeletal muscle. Found in normal as well as in most neoplastic tissues.

It is found in the cell junction. The protein localises to the adherens junction. Its subcellular location is the cell membrane. The protein resides in the tight junction. It localises to the nucleus. In terms of biological role, plays a role in tight junctions and adherens junctions. Acts as a positive regulator of RANKL-induced osteoclast differentiation, potentially via mediating downstream transcriptional activity. This chain is Tight junction protein 2, found in Homo sapiens (Human).